Here is a 31-residue protein sequence, read N- to C-terminus: Chassatide C5 (31 aa).

The cyclopeptide (Gly-Asn) cross-link spans 1–31 (GVIPCGESCVFIPCISSVVGCSCKNKVCYRN). 3 disulfide bridges follow: Cys-5–Cys-21, Cys-9–Cys-23, and Cys-14–Cys-28.

This is a cyclic peptide. As to expression, expressed in pedicel, root and stem but not in leaf and fruit (at protein level).

In terms of biological role, probably participates in a plant defense mechanism. This Chassalia chartacea (Chassalia curviflora) protein is Chassatide C5.